The sequence spans 310 residues: Ribosomal RNA small subunit methyltransferase H (310 aa).

S-adenosyl-L-methionine-binding positions include Gly35–His37, Asp52, Phe79, Asp100, and Gln107.

It belongs to the methyltransferase superfamily. RsmH family.

It localises to the cytoplasm. It catalyses the reaction cytidine(1402) in 16S rRNA + S-adenosyl-L-methionine = N(4)-methylcytidine(1402) in 16S rRNA + S-adenosyl-L-homocysteine + H(+). Functionally, specifically methylates the N4 position of cytidine in position 1402 (C1402) of 16S rRNA. This Anaeromyxobacter sp. (strain K) protein is Ribosomal RNA small subunit methyltransferase H.